The chain runs to 104 residues: Large ribosomal subunit protein bL21 (104 aa).

Belongs to the bacterial ribosomal protein bL21 family. Part of the 50S ribosomal subunit. Contacts protein L20.

In terms of biological role, this protein binds to 23S rRNA in the presence of protein L20. This is Large ribosomal subunit protein bL21 from Francisella tularensis subsp. holarctica (strain FTNF002-00 / FTA).